The chain runs to 785 residues: Sexual differentiation process protein isp4 (785 aa).

A disordered region spans residues methionine 1–aspartate 28. A compositionally biased stretch (basic and acidic residues) spans isoleucine 10–serine 26. Transmembrane regions (helical) follow at residues methionine 94–leucine 114, leucine 121–phenylalanine 141, leucine 167–alanine 187, phenylalanine 196–alanine 216, phenylalanine 264–glutamine 284, leucine 339–phenylalanine 359, alanine 413–tyrosine 433, valine 461–isoleucine 481, tryptophan 490–valine 510, alanine 512–tyrosine 532, leucine 537–alanine 557, isoleucine 572–leucine 592, tyrosine 611–proline 631, threonine 642–tryptophan 662, glycine 683–phenylalanine 703, and leucine 732–tryptophan 752.

The protein belongs to the oligopeptide OPT transporter family.

The protein resides in the endoplasmic reticulum membrane. The sequence is that of Sexual differentiation process protein isp4 (isp4) from Schizosaccharomyces pombe (strain 972 / ATCC 24843) (Fission yeast).